A 773-amino-acid chain; its full sequence is Immunoglobulin domain and leucine-rich repeat-containing protein 2 (773 aa).

The signal sequence occupies residues 1–20 (MRKFVFFVVAILIQIHTTTS). Residues 21–493 (QRNRSSSPSG…DWYSYDVFNS (473 aa)) are Extracellular-facing. LRR repeat units lie at residues 52 to 73 (TRNIQCFSIDESKLLEIQKIYG), 74 to 96 (SNIQRLELHNWQHDQLNFDIFAP), 97 to 120 (FPQLEHIILRDGDLESLNGTVIHP), 122 to 144 (LKVLSIENSELTSSSEVCRLLSI), 145 to 167 (FPKIQSLSLSKNYFEKFECDTSN), and 168 to 191 (TKLKILDLSQNRISHLEVPNTLRV). Asn-114 carries N-linked (GlcNAc...) asparagine glycosylation. Asn-204 is a glycosylation site (N-linked (GlcNAc...) asparagine). 4 LRR repeats span residues 206–230 (STKLTDLDISFNKLSLWPSFDDWKF), 233–251 (LRSLSAIKLDLQTGFQLDA), 252–275 (PLLNSLNIDGASLRYLNFHQILTP), and 296–319 (PSTVTDVAFTDTMLRTLPADFIPM). The 131-residue stretch at 349 to 479 (PVYAQTSIRK…GKDYGIYHFR (131 aa)) folds into the Ig-like domain. Asn-361 and Asn-379 each carry an N-linked (GlcNAc...) asparagine glycan. Cysteines 396 and 463 form a disulfide. A helical transmembrane segment spans residues 494 to 514 (VFWGGLATSLIVCLISFLLNI). Over 515 to 773 (TWILTRKSAL…RSPDSPPEKR (259 aa)) the chain is Cytoplasmic. A disordered region spans residues 725 to 773 (VRPGIIPTNAPSIRFTTKPTTSSISNEASTSSPSSSGAHRSPDSPPEKR). The segment covering 733-745 (NAPSIRFTTKPTT) has biased composition (polar residues). Residues 746-763 (SSISNEASTSSPSSSGAH) are compositionally biased toward low complexity. Residues 764-773 (RSPDSPPEKR) show a composition bias toward basic and acidic residues.

The protein resides in the membrane. This Caenorhabditis elegans protein is Immunoglobulin domain and leucine-rich repeat-containing protein 2.